A 577-amino-acid chain; its full sequence is Lysine-specific demethylase 7B (577 aa).

A PHD-type zinc finger spans residues glutamine 5 to histidine 56. In terms of domain architecture, JmjC spans phenylalanine 198 to arginine 354. Threonine 247 contributes to the substrate binding site. Fe cation is bound by residues histidine 250 and aspartate 252. Lysine 267 provides a ligand contact to substrate. Histidine 322 is a Fe cation binding site. The tract at residues cysteine 460–histidine 513 is disordered. The span at histidine 472–histidine 502 shows a compositional bias: basic residues.

The protein belongs to the JHDM1 histone demethylase family. JHDM1D subfamily. The cofactor is Fe(2+). In terms of tissue distribution, predominantly expressed in brain.

It is found in the nucleus. Its function is as follows. Histone demethylase required for brain development. Specifically demethylates dimethylated 'Lys-9' and 'Lys-27' (H3K9me2 and H3K27me2, respectively) of histone H3 and monomethylated histone H4 'Lys-20' residue (H4K20Me1), thereby playing a central role in histone code. This Danio rerio (Zebrafish) protein is Lysine-specific demethylase 7B (jhdm1db).